Reading from the N-terminus, the 76-residue chain is Esculentin-2CG1 (76 aa).

The first 22 residues, 1–22 (MFTMKKSMLLLFFLGTISLSLC), serve as a signal peptide directing secretion. The propeptide at 23-37 (EEERSADEDDGEEEV) is removed in mature form. Cysteine 70 and cysteine 76 form a disulfide bridge.

As to expression, expressed by the skin glands.

It is found in the secreted. In terms of biological role, antimicrobial peptide active against a variety of Gram-positive and some Gram-negative bacterial strains. Has antifungal activity against a slime mold isolate. Has hemolytic activity against human erythrocytes. The sequence is that of Esculentin-2CG1 from Amolops chunganensis (Chungan torrent frog).